The primary structure comprises 137 residues: Lysozyme (137 aa).

Residues 1-18 form the signal peptide; that stretch reads MQKLIIFALVVLCVGSEA. A C-type lysozyme domain is found at 19–137; that stretch reads KTFTRCGLVH…QGSLPDISSC (119 aa). 4 cysteine pairs are disulfide-bonded: Cys24-Cys137, Cys45-Cys127, Cys79-Cys93, and Cys89-Cys107. Catalysis depends on residues Glu50 and Asp67.

The protein belongs to the glycosyl hydrolase 22 family.

It carries out the reaction Hydrolysis of (1-&gt;4)-beta-linkages between N-acetylmuramic acid and N-acetyl-D-glucosamine residues in a peptidoglycan and between N-acetyl-D-glucosamine residues in chitodextrins.. Functionally, lysozymes have primarily a bacteriolytic function; those in tissues and body fluids are associated with the monocyte-macrophage system and enhance the activity of immunoagents. Active against E.coli and M.luteus. The sequence is that of Lysozyme from Bombyx mori (Silk moth).